The sequence spans 689 residues: Glycine--tRNA ligase beta subunit (689 aa).

The protein belongs to the class-II aminoacyl-tRNA synthetase family. As to quaternary structure, tetramer of two alpha and two beta subunits.

Its subcellular location is the cytoplasm. The enzyme catalyses tRNA(Gly) + glycine + ATP = glycyl-tRNA(Gly) + AMP + diphosphate. The protein is Glycine--tRNA ligase beta subunit of Salmonella paratyphi A (strain ATCC 9150 / SARB42).